Consider the following 269-residue polypeptide: Shikimate dehydrogenase (NADP(+)) (269 aa).

Residues 17 to 19 (SKS) and Thr-64 each bind shikimate. Lys-68 serves as the catalytic Proton acceptor. NADP(+) is bound at residue Asp-80. The shikimate site is built by Asn-89 and Asp-105. NADP(+) contacts are provided by residues 130–134 (GAGGA), 154–159 (NRTHAK), and Met-213. Residue Tyr-215 participates in shikimate binding. An NADP(+)-binding site is contributed by Gly-237.

The protein belongs to the shikimate dehydrogenase family. As to quaternary structure, homodimer.

The enzyme catalyses shikimate + NADP(+) = 3-dehydroshikimate + NADPH + H(+). Its pathway is metabolic intermediate biosynthesis; chorismate biosynthesis; chorismate from D-erythrose 4-phosphate and phosphoenolpyruvate: step 4/7. In terms of biological role, involved in the biosynthesis of the chorismate, which leads to the biosynthesis of aromatic amino acids. Catalyzes the reversible NADPH linked reduction of 3-dehydroshikimate (DHSA) to yield shikimate (SA). The protein is Shikimate dehydrogenase (NADP(+)) of Neisseria polysaccharea.